Reading from the N-terminus, the 187-residue chain is Elongation factor P (187 aa).

This sequence belongs to the elongation factor P family.

Its subcellular location is the cytoplasm. The protein operates within protein biosynthesis; polypeptide chain elongation. In terms of biological role, involved in peptide bond synthesis. Stimulates efficient translation and peptide-bond synthesis on native or reconstituted 70S ribosomes in vitro. Probably functions indirectly by altering the affinity of the ribosome for aminoacyl-tRNA, thus increasing their reactivity as acceptors for peptidyl transferase. The sequence is that of Elongation factor P from Mycobacterium sp. (strain JLS).